Reading from the N-terminus, the 221-residue chain is Protein GrpE (221 aa).

A disordered region spans residues 1 to 43 (MFTNPFGRKKDMSDDQKKNNQPDTEADNAENIKFAADDTELRA). The segment covering 8-20 (RKKDMSDDQKKNN) has biased composition (basic and acidic residues).

This sequence belongs to the GrpE family. As to quaternary structure, homodimer.

The protein resides in the cytoplasm. Functionally, participates actively in the response to hyperosmotic and heat shock by preventing the aggregation of stress-denatured proteins, in association with DnaK and GrpE. It is the nucleotide exchange factor for DnaK and may function as a thermosensor. Unfolded proteins bind initially to DnaJ; upon interaction with the DnaJ-bound protein, DnaK hydrolyzes its bound ATP, resulting in the formation of a stable complex. GrpE releases ADP from DnaK; ATP binding to DnaK triggers the release of the substrate protein, thus completing the reaction cycle. Several rounds of ATP-dependent interactions between DnaJ, DnaK and GrpE are required for fully efficient folding. The polypeptide is Protein GrpE (Deinococcus radiodurans (strain ATCC 13939 / DSM 20539 / JCM 16871 / CCUG 27074 / LMG 4051 / NBRC 15346 / NCIMB 9279 / VKM B-1422 / R1)).